Reading from the N-terminus, the 351-residue chain is Thiamine-phosphate synthase (351 aa).

Residues 1–128 form a unknown region; the sequence is MKNPNIIQPE…SKIASEIRYE (128 aa). The thiamine-phosphate synthase stretch occupies residues 129–351; it reads IYTLEIEILN…IIIKELSHEN (223 aa). 4-amino-2-methyl-5-(diphosphooxymethyl)pyrimidine contacts are provided by residues 180 to 184 and Asn212; that span reads QHRFK. Asn213 and Asp232 together coordinate Mg(2+). Position 251 (Ser251) interacts with 4-amino-2-methyl-5-(diphosphooxymethyl)pyrimidine. A 2-[(2R,5Z)-2-carboxy-4-methylthiazol-5(2H)-ylidene]ethyl phosphate-binding site is contributed by 277–279; sequence TLT. 4-amino-2-methyl-5-(diphosphooxymethyl)pyrimidine is bound at residue Lys280. Residues Gly307 and 327–328 each bind 2-[(2R,5Z)-2-carboxy-4-methylthiazol-5(2H)-ylidene]ethyl phosphate; that span reads VS.

Belongs to the thiamine-phosphate synthase family.

The catalysed reaction is 2-[(2R,5Z)-2-carboxy-4-methylthiazol-5(2H)-ylidene]ethyl phosphate + 4-amino-2-methyl-5-(diphosphooxymethyl)pyrimidine + 2 H(+) = thiamine phosphate + CO2 + diphosphate. It catalyses the reaction 2-(2-carboxy-4-methylthiazol-5-yl)ethyl phosphate + 4-amino-2-methyl-5-(diphosphooxymethyl)pyrimidine + 2 H(+) = thiamine phosphate + CO2 + diphosphate. The enzyme catalyses 4-methyl-5-(2-phosphooxyethyl)-thiazole + 4-amino-2-methyl-5-(diphosphooxymethyl)pyrimidine + H(+) = thiamine phosphate + diphosphate. Its pathway is cofactor biosynthesis; thiamine diphosphate biosynthesis; thiamine phosphate from 4-amino-2-methyl-5-diphosphomethylpyrimidine and 4-methyl-5-(2-phosphoethyl)-thiazole: step 1/1. Its function is as follows. Condenses 4-methyl-5-(beta-hydroxyethyl)thiazole monophosphate (THZ-P) and 2-methyl-4-amino-5-hydroxymethyl pyrimidine pyrophosphate (HMP-PP) to form thiamine monophosphate (TMP). In Prochlorococcus marinus subsp. pastoris (strain CCMP1986 / NIES-2087 / MED4), this protein is Thiamine-phosphate synthase.